Reading from the N-terminus, the 562-residue chain is Sulfite reductase [NADPH] hemoprotein beta-component (562 aa).

[4Fe-4S] cluster-binding residues include cysteine 426, cysteine 432, cysteine 471, and cysteine 475. Cysteine 475 contacts siroheme.

The protein belongs to the nitrite and sulfite reductase 4Fe-4S domain family. In terms of assembly, alpha(8)-beta(8). The alpha component is a flavoprotein, the beta component is a hemoprotein. Requires siroheme as cofactor. The cofactor is [4Fe-4S] cluster.

The catalysed reaction is hydrogen sulfide + 3 NADP(+) + 3 H2O = sulfite + 3 NADPH + 4 H(+). It functions in the pathway sulfur metabolism; hydrogen sulfide biosynthesis; hydrogen sulfide from sulfite (NADPH route): step 1/1. Its function is as follows. Component of the sulfite reductase complex that catalyzes the 6-electron reduction of sulfite to sulfide. This is one of several activities required for the biosynthesis of L-cysteine from sulfate. This chain is Sulfite reductase [NADPH] hemoprotein beta-component, found in Shewanella denitrificans (strain OS217 / ATCC BAA-1090 / DSM 15013).